Here is a 391-residue protein sequence, read N- to C-terminus: MAAVVENVVKLLGEQYYKDAMEQCHNYNARLCAERSVRLPFLDSQTGVAQSNCYIWMEKRHRGPGLASGQLYSYPARRWRKKRRAHPPEDPRLSFPSIKPDTDQTLKKEGLISQDGSSLEALLRTDPLEKRGAPDPRVDDDSLGEFPVTNSRARKRILEPDDFLDDLDDEDYEEDTPKRRGKGKSKGKGVGSARKKLDASILEDRDKPYACDICGKRYKNRPGLSYHYAHSHLAEEEGEDKEDSQPPTPVSQRSEEQKSKKGPDGLALPNNYCDFCLGDSKINKKTGQPEELVSCSDCGRSGHPSCLQFTPVMMAAVKTYRWQCIECKCCNICGTSENDDQLLFCDDCDRGYHMYCLTPSMSEPPEGSWSCHLCLDLLKEKASIYQNQNSS.

A2 is modified (N-acetylalanine). Residues K10, K99, K107, and K108 each participate in a glycyl lysine isopeptide (Lys-Gly) (interchain with G-Cter in SUMO2) cross-link. Disordered stretches follow at residues 79–146 (WRKK…LGEF) and 165–196 (DDLD…ARKK). Basic and acidic residues-rich tracts occupy residues 100–110 (PDTDQTLKKEG) and 126–140 (DPLE…RVDD). At S142 the chain carries Phosphoserine. Residues 165-174 (DDLDDEDYEE) show a composition bias toward acidic residues. A Phosphotyrosine modification is found at Y172. Residue T176 is modified to Phosphothreonine. Glycyl lysine isopeptide (Lys-Gly) (interchain with G-Cter in SUMO2) cross-links involve residues K178 and K196. Residue S200 is modified to Phosphoserine. The C2H2-type zinc finger occupies 209-232 (YACDICGKRYKNRPGLSYHYAHSH). The tract at residues 233–266 (LAEEEGEDKEDSQPPTPVSQRSEEQKSKKGPDGL) is disordered. Phosphoserine is present on S244. The span at 253 to 263 (RSEEQKSKKGP) shows a compositional bias: basic and acidic residues. PHD-type zinc fingers lie at residues 270–330 (NNYC…CKCC) and 327–377 (CKCC…CLDL). S280 bears the Phosphoserine mark. A Glycyl lysine isopeptide (Lys-Gly) (interchain with G-Cter in SUMO2) cross-link involves residue K281.

The protein belongs to the requiem/DPF family. In terms of assembly, interacts with the nucleosomes, in particular nucleosomes bearing histone H3 crotonylated at 'Lys-14' (H3K14cr) for which DPF2 has high affinity. Also interacts (via PHD-type zinc finger domains) with histone H3 butyrylated at 'Lys-14' (H3K14bu), histone H3 propionylated at 'Lys-14' (H3K14pr), and histone H3 acetylated at 'Lys-14' (H3K14ac). Interacts with histone H3 acetylated at 'Lys-9' (H3K9ac), histone H3 di-methylated at 'Lys-9' (H3K9me2), and histone H3 tri-methylated at 'Lys-9' (H3K9me3). Interacts with histone H4 acetylated at 'Lys-12' (H4K12ac). Interacts with histone H4 acetylated at 'Lys-16' (H4K16ac). Interacts with SWI/SNF complex components. Interacts with SMARCA2, SMARCA4, SMARCB1 and SMARCD1. Interacts with SMARCC1, SMARCC2 and ACTL6A. Interacts with RUNX1. In terms of tissue distribution, ubiquitous.

The protein resides in the nucleus. It localises to the cytoplasm. Its function is as follows. Plays an active role in transcriptional regulation by binding modified histones H3 and H4. Is a negative regulator of myeloid differentiation of hematopoietic progenitor cells. Might also have a role in the development and maturation of lymphoid cells. Involved in the regulation of non-canonical NF-kappa-B pathway. The chain is Zinc finger protein ubi-d4 (DPF2) from Homo sapiens (Human).